The sequence spans 406 residues: L-cysteine:1D-myo-inositol 2-amino-2-deoxy-alpha-D-glucopyranoside ligase (406 aa).

Cys-45 contributes to the Zn(2+) binding site. L-cysteinyl-5'-AMP-binding positions include 45–48 (CGIT), Thr-60, and 83–85 (NIT). The short motif at 47–57 (ITPYDATHMGH) is the 'HIGH' region element. The 'ERGGDP' region signature appears at 185-190 (ERGGDP). An L-cysteinyl-5'-AMP-binding site is contributed by Trp-225. Residue Cys-229 coordinates Zn(2+). 247-249 (GSD) provides a ligand contact to L-cysteinyl-5'-AMP. His-254 contacts Zn(2+). Val-281 is an L-cysteinyl-5'-AMP binding site. A 'KMSKS' region motif is present at residues 287–291 (KMSKS).

Belongs to the class-I aminoacyl-tRNA synthetase family. MshC subfamily. Monomer. Requires Zn(2+) as cofactor.

It carries out the reaction 1D-myo-inositol 2-amino-2-deoxy-alpha-D-glucopyranoside + L-cysteine + ATP = 1D-myo-inositol 2-(L-cysteinylamino)-2-deoxy-alpha-D-glucopyranoside + AMP + diphosphate + H(+). Functionally, catalyzes the ATP-dependent condensation of GlcN-Ins and L-cysteine to form L-Cys-GlcN-Ins. This Kribbella flavida (strain DSM 17836 / JCM 10339 / NBRC 14399) protein is L-cysteine:1D-myo-inositol 2-amino-2-deoxy-alpha-D-glucopyranoside ligase.